Here is a 255-residue protein sequence, read N- to C-terminus: MTDLVALEHIAVAFGRKAVLHDISFTLRHGHILTLLSPNGAGKSTLVWVVLSLIAPDARTIRRQPKLRVGYVPQKIHIDPTLPLTVERFMRLHPGVKKGDIGPALARVQAQHLHQAPMQKLSGGEMQWVLLARALLNSPQLLVLDEPTQGVDVNGQVALYDLIDNLRHTLGYGVLMVSHDLHLVMAKIDEMLCLNRHICCSGTPEVVSAHPDFIAMFGYRESSQLAIYRHHHNHRHDLQGEVMPAAQPHGECRHD.

The ABC transporter domain occupies 5–220 (VALEHIAVAF…PDFIAMFGYR (216 aa)).

It belongs to the ABC transporter superfamily. Zinc importer (TC 3.A.1.15.5) family. In terms of assembly, the complex is composed of two ATP-binding proteins (ZnuC), two transmembrane proteins (ZnuB) and a solute-binding protein (ZnuA).

The protein resides in the cell inner membrane. The enzyme catalyses Zn(2+)(out) + ATP(in) + H2O(in) = Zn(2+)(in) + ADP(in) + phosphate(in) + H(+)(in). Part of the ABC transporter complex ZnuABC involved in zinc import. Responsible for energy coupling to the transport system. The sequence is that of Zinc import ATP-binding protein ZnuC from Sodalis glossinidius (strain morsitans).